Consider the following 25-residue polypeptide: C-type natriuretic peptide (25 aa).

Cys9 and Cys25 are disulfide-bonded.

As to expression, venom gland.

The protein localises to the secreted. In terms of biological role, snake venom natriuretic peptide that has a vasorelaxant activity in rat aortic strips and a diuretic potency in anesthetized rats. May act by activating natriuretic receptors (NPR1 and/or NPR2). This chain is C-type natriuretic peptide, found in Crotalus atrox (Western diamondback rattlesnake).